Reading from the N-terminus, the 64-residue chain is uncharacterized protein (64 aa).

The segment at methionine 1–serine 64 is disordered. Residues arginine 16–glycine 28 show a composition bias toward gly residues.

This is an uncharacterized protein from Homo sapiens (Human).